The primary structure comprises 626 residues: UvrABC system protein C (626 aa).

Positions 20–97 (ECSGVYKMLD…IKKFQPKFNI (78 aa)) constitute a GIY-YIG domain. A UVR domain is found at 207–242 (IALQANLSKKMQELSSQMRFEEAAEIRDRIKALSYV).

Belongs to the UvrC family. As to quaternary structure, interacts with UvrB in an incision complex.

The protein resides in the cytoplasm. In terms of biological role, the UvrABC repair system catalyzes the recognition and processing of DNA lesions. UvrC both incises the 5' and 3' sides of the lesion. The N-terminal half is responsible for the 3' incision and the C-terminal half is responsible for the 5' incision. The protein is UvrABC system protein C of Rickettsia prowazekii (strain Madrid E).